A 146-amino-acid polypeptide reads, in one-letter code: VHLTAEEKSAVTSLWGKVNVDEVGGEALGRLLVVYPWTQRYFDSFGDLSTPDAVMGNPKVKAHGKKVLNSFSEGLKNLDNLKGTFAKLSELHCDKLHVDPENFKLLGNVLVCVLAHHFGKEFTPQVQAAYQKVVAGVANALAHKYH.

N-acetylvaline is present on V1. One can recognise a Globin domain in the interval 2–146; it reads HLTAEEKSAV…VANALAHKYH (145 aa). Phosphothreonine is present on T12. A Phosphoserine modification is found at S44. Residue K59 is modified to N6-acetyllysine. A heme b-binding site is contributed by H63. K82 is modified (N6-acetyllysine). A heme b-binding site is contributed by H92. At C93 the chain carries S-nitrosocysteine. An N6-acetyllysine modification is found at K144.

Belongs to the globin family. As to quaternary structure, heterotetramer of two alpha chains and two beta chains. In terms of tissue distribution, red blood cells.

Involved in oxygen transport from the lung to the various peripheral tissues. The polypeptide is Hemoglobin subunit beta (HBB) (Meles meles (Eurasian badger)).